The chain runs to 1079 residues: Electrogenic sodium bicarbonate cotransporter 1 (1079 aa).

The required for interaction with AHCYL1 stretch occupies residues 1 to 62 (MEDEAVLDRG…EKREKERISE (62 aa)). Topologically, residues 1-466 (MEDEAVLDRG…FASDFYDALN (466 aa)) are cytoplasmic. Tyrosine 30 bears the Phosphotyrosine mark. Residues 39–52 (YRRRRRHKRKTGHK) are compositionally biased toward basic residues. The disordered stretch occupies residues 39–78 (YRRRRRHKRKTGHKEKREKERISENYSDKSDVENADESSS). Threonine 49 is modified (phosphothreonine; by PKA). The span at 53–70 (EKREKERISENYSDKSDV) shows a compositional bias: basic and acidic residues. A phosphoserine mark is found at serine 61, serine 65, serine 68, serine 223, serine 232, serine 233, and serine 245. The segment at 237–265 (MFTSPDNGSPAMTHRNLTSSSLNDISDKP) is disordered. A phosphothreonine mark is found at threonine 249 and threonine 254. Polar residues predominate over residues 251–260 (RNLTSSSLND). Residues serine 256, serine 257, and serine 262 each carry the phosphoserine modification. A helical transmembrane segment spans residues 467–491 (IQSLSAILFIYLATVTNAITFGGLL). Over 492–501 (GDATDNMQGV) the chain is Extracellular. A helical membrane pass occupies residues 502–520 (LESFLGTAVSGAIFCLFAG). Residue glutamine 521 is a topological domain, cytoplasmic. Residues 522–542 (PLTILSSTGPVLVFERLLFNF) form a discontinuously helical membrane-spanning segment. Residues 543 to 550 (SKDHNFDY) lie on the Extracellular side of the membrane. Residues 551-571 (LEFRLWIGLWSAFLCLILVAT) form a helical membrane-spanning segment. At 572–585 (DASFLVQYFTRFTE) the chain is on the cytoplasmic side. A helical membrane pass occupies residues 586–609 (EGFSSLISFIFIYDAFKKMIKLAD). The Extracellular segment spans residues 610-692 (YYPINSDFKV…GNNCNFVPDV (83 aa)). Residues 693–710 (TLMSFILFLGTYTSSMAL) form a helical membrane-spanning segment. At 711 to 725 (KKFKTSRYFPTTARK) the chain is on the cytoplasmic side. A helical membrane pass occupies residues 726–745 (LISDFAIILSILIFCVIDAL). The Extracellular portion of the chain corresponds to 746–779 (VGVDTPKLIVPSEFKPTSPNRGWFVPPFGGNPWW). Positions 748 to 779 (VDTPKLIVPSEFKPTSPNRGWFVPPFGGNPWW) are interaction with CA4. Residues 780–807 (VYLAAAIPALLVTILIFMDQQITAVIVN) traverse the membrane as a helical segment. Residues 808–819 (RKEHKLKKGAGY) lie on the Cytoplasmic side of the membrane. A helical membrane pass occupies residues 820-836 (HLDLFWVAILMVVCSFM). Residue alanine 837 is a topological domain, extracellular. The discontinuously helical transmembrane segment at 838–855 (LPWYVAATVISIAHIDSL) threads the bilayer. Topologically, residues 856–877 (KMETETSAPGEQPKFLGVREQR) are cytoplasmic. Residues 878-894 (VTGTLVFILTGLSVFMA) traverse the membrane as a helical segment. Residues 895–901 (PILKFIP) are Extracellular-facing. Residues 902–918 (MPVLYGVFLYMGVASLN) form a helical membrane-spanning segment. At 919 to 960 (GVQFMDRLKLLLMPLKHQPDFIYLRHVPLRRVHLFTFLQVLC) the chain is on the cytoplasmic side. The discontinuously helical intramembrane region spans 961–986 (LALLWILKSTVAAIIFPVMILALVAV). Topologically, residues 987-1079 (RKGMDYLFSQ…STFLERHTSC (93 aa)) are cytoplasmic. The interval 1002-1004 (LDD) is CA2-binding. A disordered region spans residues 1012 to 1079 (KKKEDEKKKK…STFLERHTSC (68 aa)). At serine 1026 the chain carries Phosphoserine; by PKA. Serine 1029 bears the Phosphoserine mark. Residues 1030 to 1033 (DNDD) form a CA2-binding region. Phosphoserine is present on residues serine 1034 and serine 1044. Residues 1057-1059 (FLS) form a required for basolateral targeting region. Residues 1062–1079 (KPSDREKSSTFLERHTSC) show a composition bias toward basic and acidic residues. Serine 1069 bears the Phosphoserine mark.

This sequence belongs to the anion exchanger (TC 2.A.31) family. As to quaternary structure, homodimer. Interacts with CA2/carbonic anhydrase 2 and CA4/carbonic anhydrase 4 which may regulate transporter activity. Isoform 1 but not isoform 2 interacts with AHCYL1 (via PEST domain when phosphorylated); the interaction increases SLC4A4 isoform 1 activity. Interacts with AHCYL2. Post-translationally, phosphorylation of Ser-1026 by PKA increases the binding of CA2 and changes the Na(+):HCO3(-) stoichiometry of the transporter from 3:1 to 2:1. Phosphorylated in presence of STK39 and dephosphorylated in presence of PP1 phosphatase; phosphorylation seems to inhibit SLC4A4 activity. N-glycosylated. May not be necessary for the transporter basic functions. In terms of tissue distribution, expressed in colonic mucosa, kidney cortex and to gastric mucosa.

The protein localises to the basolateral cell membrane. Its subcellular location is the cell membrane. It carries out the reaction 2 hydrogencarbonate(out) + Na(+)(out) = 2 hydrogencarbonate(in) + Na(+)(in). The catalysed reaction is 3 hydrogencarbonate(out) + Na(+)(out) = 3 hydrogencarbonate(in) + Na(+)(in). Functionally, electrogenic sodium/bicarbonate cotransporter with a Na(+):HCO3(-) stoichiometry varying from 1:2 to 1:3. May regulate bicarbonate influx/efflux at the basolateral membrane of cells and regulate intracellular pH. The protein is Electrogenic sodium bicarbonate cotransporter 1 (SLC4A4) of Oryctolagus cuniculus (Rabbit).